The primary structure comprises 351 residues: Cytochrome c biogenesis protein CcsA (351 aa).

The next 8 helical transmembrane spans lie at 17–37 (VLFLTMLLYWIGAAFPGLPAI), 38–58 (NALGTAGMAIANLSIATLLGA), 68–88 (LSNLYESLFFLSWGITTVHLI), 97–117 (LVGVFTTPVAMGIVAFATLTL), 143–163 (MMLSYSALMVGSLLAIAFLVI), 259–279 (IIGLGFPLLTIGIIAGAVWAN), 286–306 (WSWDPKETWALITWLVFAAYL), and 320–340 (AILAASGFVVVWICYLGVNLL).

Belongs to the CcmF/CycK/Ccl1/NrfE/CcsA family. In terms of assembly, may interact with ccs1.

Its subcellular location is the cellular thylakoid membrane. In terms of biological role, required during biogenesis of c-type cytochromes (cytochrome c6 and cytochrome f) at the step of heme attachment. The chain is Cytochrome c biogenesis protein CcsA from Trichormus variabilis (strain ATCC 29413 / PCC 7937) (Anabaena variabilis).